Here is a 69-residue protein sequence, read N- to C-terminus: Alpha-elapitoxin-Lc2c (69 aa).

Cystine bridges form between Cys3-Cys20, Cys13-Cys41, Cys45-Cys56, and Cys57-Cys62.

It belongs to the three-finger toxin family. Long-chain subfamily. Type II alpha-neurotoxin sub-subfamily. Expressed by the venom gland.

It localises to the secreted. In terms of biological role, binds with high affinity to muscular nicotinic acetylcholine receptors (nAChRs), whereas it binds with a low affinity to neuronal alpha-7/CHRNA7 nAChRs. The sequence is that of Alpha-elapitoxin-Lc2c from Laticauda colubrina (Yellow-lipped sea krait).